A 283-amino-acid chain; its full sequence is Trafficking protein particle complex subunit 31 (283 aa).

The span at 1–16 shows a compositional bias: polar residues; the sequence is MSQRIIQPSASDQQFP. Disordered stretches follow at residues 1-20 and 126-156; these read MSQRIIQPSASDQQFPGKSD and SSKLSNASNSPGMLANSSTATSASANERLQE. Residues 126-151 show a composition bias toward low complexity; it reads SSKLSNASNSPGMLANSSTATSASAN.

The protein belongs to the TRAPP small subunits family. BET3 subfamily. In terms of assembly, part of the multisubunit TRAPP (transport protein particle) I complex composed of BET3, BET5, TRS20, TRS23, TRS31 and TRS33. Part of the multisubunit TRAPP (transport protein particle) II complex composed of BET3, BET5, TRS20, TRS23, TRS31, TRS33, TRS65, TRS85, TRS120 and TRS130. Part of the multisubunit TRAPP (transport protein particle) III complex composed of BET3, BET5, TRS20, TRS23, TRS31, TRS33 and TRS85.

It localises to the golgi apparatus. Its subcellular location is the cis-Golgi network. It is found in the endoplasmic reticulum. The protein localises to the preautophagosomal structure. Component of the TRAPP I, TRAPP II and TRAPP III complexes which act as guanine nucleotide exchange factors (GEF) for YPT1. TRAPP I plays a key role in the late stages of endoplasmic reticulum to Golgi traffic. TRAPP II plays a role in intra-Golgi transport. TRAPP III plays a role in autophagosome formation. This Saccharomyces cerevisiae (strain ATCC 204508 / S288c) (Baker's yeast) protein is Trafficking protein particle complex subunit 31 (TRS31).